A 365-amino-acid chain; its full sequence is Annexin B22 (365 aa).

Annexin repeat units follow at residues 34-105 (FSAS…QLIV), 106-185 (DTPY…SLVQ), 211-283 (ELAE…AVLR), and 287-358 (DRPS…VLMG). Ca(2+) contacts are provided by Met-47, Gly-49, Gly-51, Thr-52, Glu-54, Asp-91, Met-119, Gly-121, Gly-123, Asp-126, Lys-169, Glu-171, Thr-172, Glu-177, Asp-273, Met-300, Gly-302, Leu-303, Gly-304, and Asp-344.

This sequence belongs to the annexin family. In terms of assembly, homodimer.

It localises to the tegument. It is found in the secreted. The protein localises to the extracellular exosome. The protein resides in the host cell. Functionally, involved in reproduction of the worm. Involved in host-parasite interaction. Delivered into the host cell by means of parasite exosomes. Binds to acidic phospholipid membranes in a calcium-dependent manner in vitro. Causes aggregation of liposomes in the presence of calcium, but not in its absence. Likely to promote membrane fusion. May provide structural integrity within the tegument. This chain is Annexin B22, found in Schistosoma mansoni (Blood fluke).